The following is a 285-amino-acid chain: Inositol oxygenase (285 aa).

Residue Arg-29 participates in substrate binding. Ser-33 is modified (phosphoserine). 85 to 87 (DES) provides a ligand contact to substrate. The Fe cation site is built by His-98, His-123, and Asp-124. Substrate is bound by residues Lys-127 and 141-142 (GD). His-194, His-220, and Asp-253 together coordinate Fe cation. 220–221 (HS) is a binding site for substrate.

It belongs to the myo-inositol oxygenase family. Fe cation serves as cofactor.

It localises to the cytoplasm. It carries out the reaction myo-inositol + O2 = D-glucuronate + H2O + H(+). The protein operates within polyol metabolism; myo-inositol degradation into D-glucuronate; D-glucuronate from myo-inositol: step 1/1. The chain is Inositol oxygenase (MIOX) from Pongo abelii (Sumatran orangutan).